The primary structure comprises 158 residues: Small ribosomal subunit protein uS9 (158 aa).

Residues 1–10 (MSDTMQSLDQ) show a composition bias toward polar residues. The interval 1–35 (MSDTMQSLDQLSALKTAAPDAPKREKKVDKQGRAY) is disordered. Residues 21–32 (APKREKKVDKQG) are compositionally biased toward basic and acidic residues.

This sequence belongs to the universal ribosomal protein uS9 family.

The chain is Small ribosomal subunit protein uS9 from Afipia carboxidovorans (strain ATCC 49405 / DSM 1227 / KCTC 32145 / OM5) (Oligotropha carboxidovorans).